A 225-amino-acid chain; its full sequence is Deoxyribose-phosphate aldolase (225 aa).

The active-site Proton donor/acceptor is D94. The Schiff-base intermediate with acetaldehyde role is filled by K158. K187 (proton donor/acceptor) is an active-site residue.

It belongs to the DeoC/FbaB aldolase family. DeoC type 1 subfamily.

Its subcellular location is the cytoplasm. It catalyses the reaction 2-deoxy-D-ribose 5-phosphate = D-glyceraldehyde 3-phosphate + acetaldehyde. Its pathway is carbohydrate degradation; 2-deoxy-D-ribose 1-phosphate degradation; D-glyceraldehyde 3-phosphate and acetaldehyde from 2-deoxy-alpha-D-ribose 1-phosphate: step 2/2. In terms of biological role, catalyzes a reversible aldol reaction between acetaldehyde and D-glyceraldehyde 3-phosphate to generate 2-deoxy-D-ribose 5-phosphate. In Thermococcus gammatolerans (strain DSM 15229 / JCM 11827 / EJ3), this protein is Deoxyribose-phosphate aldolase.